A 172-amino-acid polypeptide reads, in one-letter code: Large ribosomal subunit protein uL10 (172 aa).

This sequence belongs to the universal ribosomal protein uL10 family. Part of the ribosomal stalk of the 50S ribosomal subunit. The N-terminus interacts with L11 and the large rRNA to form the base of the stalk. The C-terminus forms an elongated spine to which L12 dimers bind in a sequential fashion forming a multimeric L10(L12)X complex.

Its function is as follows. Forms part of the ribosomal stalk, playing a central role in the interaction of the ribosome with GTP-bound translation factors. In Chelativorans sp. (strain BNC1), this protein is Large ribosomal subunit protein uL10.